The chain runs to 155 residues: Ribosomal RNA large subunit methyltransferase H (155 aa).

S-adenosyl-L-methionine-binding positions include leucine 72, glycine 103, and 122-127 (LSALTL).

Belongs to the RNA methyltransferase RlmH family. As to quaternary structure, homodimer.

Its subcellular location is the cytoplasm. The enzyme catalyses pseudouridine(1915) in 23S rRNA + S-adenosyl-L-methionine = N(3)-methylpseudouridine(1915) in 23S rRNA + S-adenosyl-L-homocysteine + H(+). Specifically methylates the pseudouridine at position 1915 (m3Psi1915) in 23S rRNA. The chain is Ribosomal RNA large subunit methyltransferase H from Citrobacter koseri (strain ATCC BAA-895 / CDC 4225-83 / SGSC4696).